The sequence spans 313 residues: Olfactory receptor 51A4 (313 aa).

Over M1–I27 the chain is Extracellular. N5 carries N-linked (GlcNAc...) asparagine glycosylation. Residues W28 to L48 form a helical membrane-spanning segment. Residues F49 to S56 lie on the Cytoplasmic side of the membrane. Residues L57 to L77 traverse the membrane as a helical segment. Residues S78–A101 lie on the Extracellular side of the membrane. C99 and C191 form a disulfide bridge. The helical transmembrane segment at Q102 to F122 threads the bilayer. The Cytoplasmic segment spans residues D123–V141. A helical membrane pass occupies residues R142–P162. Residues F163–V198 are Extracellular-facing. A helical transmembrane segment spans residues I199 to S218. Topologically, residues Y219–A238 are cytoplasmic. Residues L239–L259 form a helical membrane-spanning segment. The Extracellular segment spans residues A260–N274. The helical transmembrane segment at V275–V295 threads the bilayer. Topologically, residues K296–I313 are cytoplasmic.

It belongs to the G-protein coupled receptor 1 family.

It localises to the cell membrane. Functionally, odorant receptor. This Homo sapiens (Human) protein is Olfactory receptor 51A4 (OR51A4).